We begin with the raw amino-acid sequence, 157 residues long: Large ribosomal subunit protein uL15 (157 aa).

Positions 1 to 40 (MKLHELSDNPGATKKRMRIGRGPGSGKGKMGGRGIKGQKS) are disordered. Gly residues predominate over residues 21–35 (RGPGSGKGKMGGRGI).

The protein belongs to the universal ribosomal protein uL15 family. Part of the 50S ribosomal subunit.

In terms of biological role, binds to the 23S rRNA. The protein is Large ribosomal subunit protein uL15 of Ruegeria pomeroyi (strain ATCC 700808 / DSM 15171 / DSS-3) (Silicibacter pomeroyi).